Here is a 351-residue protein sequence, read N- to C-terminus: MGHRKLASPRRGSAGLRPRKRSSELLPTPRTWPQINSPNPKLLGFVGYKVGMSHVFMIDDWPNSPTNGKEIYMPVTVLEVPPIIPLALRAYAVDGKGEPNVITEYWSPSSLQFLDITRRIRSFSSFLKNDESKKKFEEKFGSKLDLIKSNLDRIVYFRLLVATQPRKIPSLGKKVPDLVEIQIGGGEKKAQLDYALNVLGKEISIKDVFKEGQLIDVVGVTKGKGFAGVIKRYSVVELPRWHKHRKGSRKIGTRGPSLGTPSYTPQPGQLGFHRRTEYNKRIIKIGDDPKEINPAGGFVRYGIVRNTYILLEGSILGSKKRPIFLREAVRPSYVFENAPKITYVNLLSKQG.

Disordered stretches follow at residues 1 to 31 and 246 to 271; these read MGHR…TPRT and KGSR…GQLG.

The protein belongs to the universal ribosomal protein uL3 family. As to quaternary structure, part of the 50S ribosomal subunit. Forms a cluster with proteins L14 and L24e.

In terms of biological role, one of the primary rRNA binding proteins, it binds directly near the 3'-end of the 23S rRNA, where it nucleates assembly of the 50S subunit. The chain is Large ribosomal subunit protein uL3 from Saccharolobus islandicus (strain M.16.27) (Sulfolobus islandicus).